We begin with the raw amino-acid sequence, 87 residues long: Protein Tat (87 aa).

Positions 1 to 21 (MDPVDPNLEPWNHPGSQPRTP) are disordered. Positions 1-24 (MDPVDPNLEPWNHPGSQPRTPCNK) are interaction with human CREBBP. The transactivation stretch occupies residues 1–48 (MDPVDPNLEPWNHPGSQPRTPCNKCYCKKCCYHCQMCFITKGLGISYG). Cysteine 22, cysteine 25, and cysteine 27 together coordinate Zn(2+). The tract at residues 22–37 (CNKCYCKKCCYHCQMC) is cysteine-rich. Lysine 28 carries the post-translational modification N6-acetyllysine; by host PCAF. Residues cysteine 30, histidine 33, cysteine 34, and cysteine 37 each coordinate Zn(2+). A core region spans residues 38–48 (FITKGLGISYG). Residues 45-87 (ISYGRKKRRQRRRPPQGNQAHQDPLPEQPSSQHRGDHPTGPKE) are disordered. Basic residues predominate over residues 48–58 (GRKKRRQRRRP). Positions 49–57 (RKKRRQRRR) match the Nuclear localization signal, RNA-binding (TAR), and protein transduction motif. The interval 49-87 (RKKRRQRRRPPQGNQAHQDPLPEQPSSQHRGDHPTGPKE) is interaction with the host capping enzyme RNGTT. Lysine 50 and lysine 51 each carry N6-acetyllysine; by host EP300 and GCN5L2. 2 positions are modified to asymmetric dimethylarginine; by host PRMT6: arginine 52 and arginine 53. Basic and acidic residues predominate over residues 77 to 87 (HRGDHPTGPKE). The Cell attachment site signature appears at 78-80 (RGD).

It belongs to the lentiviruses Tat family. In terms of assembly, interacts with host CCNT1. Associates with the P-TEFb complex composed at least of Tat, P-TEFb (CDK9 and CCNT1), TAR RNA, RNA Pol II. Recruits the HATs CREBBP, TAF1/TFIID, EP300, PCAF and GCN5L2. Interacts with host KAT5/Tip60; this interaction targets the latter to degradation. Interacts with the host deacetylase SIRT1. Interacts with host capping enzyme RNGTT; this interaction stimulates RNGTT. Binds to host KDR, and to the host integrins ITGAV/ITGB3 and ITGA5/ITGB1. Interacts with host KPNB1/importin beta-1 without previous binding to KPNA1/importin alpha-1. Interacts with EIF2AK2. Interacts with host nucleosome assembly protein NAP1L1; this interaction may be required for the transport of Tat within the nucleus, since the two proteins interact at the nuclear rim. Interacts with host C1QBP/SF2P32; this interaction involves lysine-acetylated Tat. Interacts with the host chemokine receptors CCR2, CCR3 and CXCR4. Interacts with host DPP4/CD26; this interaction may trigger an anti-proliferative effect. Interacts with host LDLR. Interacts with the host extracellular matrix metalloproteinase MMP1. Interacts with host PRMT6; this interaction mediates Tat's methylation. Interacts with, and is ubiquitinated by MDM2/Hdm2. Interacts with host PSMC3 and HTATIP2. Interacts with STAB1; this interaction may overcome SATB1-mediated repression of IL2 and IL2RA (interleukin) in T cells by binding to the same domain than HDAC1. Interacts (when acetylated) with human CDK13, thereby increasing HIV-1 mRNA splicing and promoting the production of the doubly spliced HIV-1 protein Nef. Interacts with host TBP; this interaction modulates the activity of transcriptional pre-initiation complex. Interacts with host RELA. Interacts with host PLSCR1; this interaction negatively regulates Tat transactivation activity by altering its subcellular distribution. Asymmetrical arginine methylation by host PRMT6 seems to diminish the transactivation capacity of Tat and affects the interaction with host CCNT1. Post-translationally, acetylation by EP300, CREBBP, GCN5L2/GCN5 and PCAF regulates the transactivation activity of Tat. EP300-mediated acetylation of Lys-50 promotes dissociation of Tat from the TAR RNA through the competitive binding to PCAF's bromodomain. In addition, the non-acetylated Tat's N-terminus can also interact with PCAF. PCAF-mediated acetylation of Lys-28 enhances Tat's binding to CCNT1. Lys-50 is deacetylated by SIRT1. In terms of processing, polyubiquitination by host MDM2 does not target Tat to degradation, but activates its transactivation function and fosters interaction with CCNT1 and TAR RNA. Phosphorylated by EIF2AK2 on serine and threonine residues adjacent to the basic region important for TAR RNA binding and function. Phosphorylation of Tat by EIF2AK2 is dependent on the prior activation of EIF2AK2 by dsRNA.

The protein resides in the host nucleus. Its subcellular location is the host nucleolus. It localises to the host cytoplasm. The protein localises to the secreted. Transcriptional activator that increases RNA Pol II processivity, thereby increasing the level of full-length viral transcripts. Recognizes a hairpin structure at the 5'-LTR of the nascent viral mRNAs referred to as the transactivation responsive RNA element (TAR) and recruits the cyclin T1-CDK9 complex (P-TEFb complex) that will in turn hyperphosphorylate the RNA polymerase II to allow efficient elongation. The CDK9 component of P-TEFb and other Tat-activated kinases hyperphosphorylate the C-terminus of RNA Pol II that becomes stabilized and much more processive. Other factors such as HTATSF1/Tat-SF1, SUPT5H/SPT5, and HTATIP2 are also important for Tat's function. Besides its effect on RNA Pol II processivity, Tat induces chromatin remodeling of proviral genes by recruiting the histone acetyltransferases (HATs) CREBBP, EP300 and PCAF to the chromatin. This also contributes to the increase in proviral transcription rate, especially when the provirus integrates in transcriptionally silent region of the host genome. To ensure maximal activation of the LTR, Tat mediates nuclear translocation of NF-kappa-B by interacting with host RELA. Through its interaction with host TBP, Tat may also modulate transcription initiation. Tat can reactivate a latently infected cell by penetrating in it and transactivating its LTR promoter. In the cytoplasm, Tat is thought to act as a translational activator of HIV-1 mRNAs. Functionally, extracellular circulating Tat can be endocytosed by surrounding uninfected cells via the binding to several surface receptors such as CD26, CXCR4, heparan sulfate proteoglycans (HSPG) or LDLR. Neurons are rarely infected, but they internalize Tat via their LDLR. Through its interaction with nuclear HATs, Tat is potentially able to control the acetylation-dependent cellular gene expression. Modulates the expression of many cellular genes involved in cell survival, proliferation or in coding for cytokines or cytokine receptors. Tat plays a role in T-cell and neurons apoptosis. Tat induced neurotoxicity and apoptosis probably contribute to neuroAIDS. Circulating Tat also acts as a chemokine-like and/or growth factor-like molecule that binds to specific receptors on the surface of the cells, affecting many cellular pathways. In the vascular system, Tat binds to ITGAV/ITGB3 and ITGA5/ITGB1 integrins dimers at the surface of endothelial cells and competes with bFGF for heparin-binding sites, leading to an excess of soluble bFGF. This Homo sapiens (Human) protein is Protein Tat.